The following is a 227-amino-acid chain: MAYPFQLGFQDATSPIMEELLHFHDHTLMIVFLISSLVLYIISSMLTTKLTHTSTMDAQEVETIWTILPAIILILIALPSLRILYMMDEINNPSLTVKTMGHQWYWSYEYTDYEDLTFDSYMIPTSDLKPGELRLLEVDNRVVLPMEMTIRMLISSEDVLHSWAVPSLGLKTDAIPGRLNQTTLVASRPGLYYGQCSEICGSNHSFMPIVLELVPLKYFEEWSASML.

Residues methionine 1–serine 14 are Mitochondrial intermembrane-facing. The chain crosses the membrane as a helical span at residues proline 15–methionine 45. Topologically, residues leucine 46–glutamine 59 are mitochondrial matrix. Residues glutamate 60–methionine 87 form a helical membrane-spanning segment. Over aspartate 88 to leucine 227 the chain is Mitochondrial intermembrane. Cu cation is bound by residues histidine 161, cysteine 196, glutamate 198, cysteine 200, histidine 204, and methionine 207. Glutamate 198 contributes to the Mg(2+) binding site.

Belongs to the cytochrome c oxidase subunit 2 family. In terms of assembly, component of the cytochrome c oxidase (complex IV, CIV), a multisubunit enzyme composed of 14 subunits. The complex is composed of a catalytic core of 3 subunits MT-CO1, MT-CO2 and MT-CO3, encoded in the mitochondrial DNA, and 11 supernumerary subunits COX4I, COX5A, COX5B, COX6A, COX6B, COX6C, COX7A, COX7B, COX7C, COX8 and NDUFA4, which are encoded in the nuclear genome. The complex exists as a monomer or a dimer and forms supercomplexes (SCs) in the inner mitochondrial membrane with NADH-ubiquinone oxidoreductase (complex I, CI) and ubiquinol-cytochrome c oxidoreductase (cytochrome b-c1 complex, complex III, CIII), resulting in different assemblies (supercomplex SCI(1)III(2)IV(1) and megacomplex MCI(2)III(2)IV(2)). Found in a complex with TMEM177, COA6, COX18, COX20, SCO1 and SCO2. Interacts with TMEM177 in a COX20-dependent manner. Interacts with COX20. Interacts with COX16. Cu cation is required as a cofactor.

It localises to the mitochondrion inner membrane. The enzyme catalyses 4 Fe(II)-[cytochrome c] + O2 + 8 H(+)(in) = 4 Fe(III)-[cytochrome c] + 2 H2O + 4 H(+)(out). Component of the cytochrome c oxidase, the last enzyme in the mitochondrial electron transport chain which drives oxidative phosphorylation. The respiratory chain contains 3 multisubunit complexes succinate dehydrogenase (complex II, CII), ubiquinol-cytochrome c oxidoreductase (cytochrome b-c1 complex, complex III, CIII) and cytochrome c oxidase (complex IV, CIV), that cooperate to transfer electrons derived from NADH and succinate to molecular oxygen, creating an electrochemical gradient over the inner membrane that drives transmembrane transport and the ATP synthase. Cytochrome c oxidase is the component of the respiratory chain that catalyzes the reduction of oxygen to water. Electrons originating from reduced cytochrome c in the intermembrane space (IMS) are transferred via the dinuclear copper A center (CU(A)) of subunit 2 and heme A of subunit 1 to the active site in subunit 1, a binuclear center (BNC) formed by heme A3 and copper B (CU(B)). The BNC reduces molecular oxygen to 2 water molecules using 4 electrons from cytochrome c in the IMS and 4 protons from the mitochondrial matrix. The chain is Cytochrome c oxidase subunit 2 (MT-CO2) from Equus asinus (Donkey).